Reading from the N-terminus, the 681-residue chain is MIDRYKHQQLRIGSVSPQQISAWATKILPNGEIVGEVTKPYTFHYKTNKPEKDGLFCERIFGPIKSGICACGNYRVIGDEKEDPKFCEQCGVEFVDSRIRRYQMGYIKLACPVTHVWYLKRLPSYIANLLDKPLKELEGLVYCDFSFARPITKKPTFLRLRGLFEYEIQSWKYSIPLFFTTQGFDTFRNREISTGAGAIREQLADLDLRIIIENSLVEWEELGEEGHTGNEWEDRKVGRRKDFLVRRVELAKHFIRTNIEPEWMVLCLLPVLPPELRPIIQIDGGKLMSSDINELYRRVIYRNNTLTDLLTTSRSTPGELVMCQEKLVQEAVDTLLDNGIRGQPMRDGHNKVYKSFSDVIEGKEGRFRETLLGKRVDYSGRSVIVVGPSLSLHRCGLPREIAIELFQTFVIRGLIRQHLASNIGVAKSKIREKEPIVWEILQEVMQGHPVLLNRAPTLHRLGIQAFQPVLVEGRAICLHPLVCKGFNADFDGDQMAVHVPLSLEAQVEARLLMFSHMNLLSPAIGDPISVPTQDMLIGLYVLTSGNRRGICVNRYNPCNRRNYQNQKRSDNSYYKYTKEPFFSNSYDAIGAYRQKRINLDSPLWLRWRLDQRVIASRETPIEVHYESLGTFYEIYGHYLIVRSLKKQILFIYIRTTVGHIALYREIEEAIQGFSRAYSYGT.

Cys-69, Cys-71, Cys-87, and Cys-90 together coordinate Zn(2+). Positions 489, 491, and 493 each coordinate Mg(2+).

This sequence belongs to the RNA polymerase beta' chain family. RpoC1 subfamily. As to quaternary structure, in plastids the minimal PEP RNA polymerase catalytic core is composed of four subunits: alpha, beta, beta', and beta''. When a (nuclear-encoded) sigma factor is associated with the core the holoenzyme is formed, which can initiate transcription. Requires Mg(2+) as cofactor. Zn(2+) is required as a cofactor.

It localises to the plastid. Its subcellular location is the chloroplast. The enzyme catalyses RNA(n) + a ribonucleoside 5'-triphosphate = RNA(n+1) + diphosphate. DNA-dependent RNA polymerase catalyzes the transcription of DNA into RNA using the four ribonucleoside triphosphates as substrates. The protein is DNA-directed RNA polymerase subunit beta' of Atropa belladonna (Belladonna).